The primary structure comprises 339 residues: Dihydroorotate dehydrogenase (quinone) (339 aa).

FMN contacts are provided by residues 62–66 (AGMDK) and Thr-86. Residue Lys-66 coordinates substrate. 111 to 115 (NRMGF) is a binding site for substrate. Asn-139 and Asn-172 together coordinate FMN. Asn-172 lines the substrate pocket. The Nucleophile role is filled by Ser-175. Asn-177 contributes to the substrate binding site. FMN-binding residues include Lys-217 and Thr-245. 246 to 247 (NT) provides a ligand contact to substrate. Residues Gly-268, Gly-297, and 318 to 319 (FS) each bind FMN.

The protein belongs to the dihydroorotate dehydrogenase family. Type 2 subfamily. As to quaternary structure, monomer. The cofactor is FMN.

Its subcellular location is the cell membrane. It carries out the reaction (S)-dihydroorotate + a quinone = orotate + a quinol. The protein operates within pyrimidine metabolism; UMP biosynthesis via de novo pathway; orotate from (S)-dihydroorotate (quinone route): step 1/1. Functionally, catalyzes the conversion of dihydroorotate to orotate with quinone as electron acceptor. The sequence is that of Dihydroorotate dehydrogenase (quinone) from Shewanella halifaxensis (strain HAW-EB4).